The sequence spans 107 residues: Large ribosomal subunit protein uL23 (107 aa).

The protein belongs to the universal ribosomal protein uL23 family. As to quaternary structure, part of the 50S ribosomal subunit. Contacts protein L29, and trigger factor when it is bound to the ribosome.

In terms of biological role, one of the early assembly proteins it binds 23S rRNA. One of the proteins that surrounds the polypeptide exit tunnel on the outside of the ribosome. Forms the main docking site for trigger factor binding to the ribosome. This chain is Large ribosomal subunit protein uL23, found in Gluconobacter oxydans (strain 621H) (Gluconobacter suboxydans).